A 412-amino-acid polypeptide reads, in one-letter code: Imidazolonepropionase (412 aa).

Positions 71 and 73 each coordinate Fe(3+). Zn(2+)-binding residues include H71 and H73. Positions 80, 143, and 176 each coordinate 4-imidazolone-5-propanoate. Y143 contributes to the N-formimidoyl-L-glutamate binding site. H241 contributes to the Fe(3+) binding site. H241 is a Zn(2+) binding site. Q244 contributes to the 4-imidazolone-5-propanoate binding site. A Fe(3+)-binding site is contributed by D316. D316 serves as a coordination point for Zn(2+). N-formimidoyl-L-glutamate contacts are provided by N318 and G320. T321 lines the 4-imidazolone-5-propanoate pocket.

It belongs to the metallo-dependent hydrolases superfamily. HutI family. Requires Zn(2+) as cofactor. It depends on Fe(3+) as a cofactor.

It is found in the cytoplasm. It catalyses the reaction 4-imidazolone-5-propanoate + H2O = N-formimidoyl-L-glutamate. It functions in the pathway amino-acid degradation; L-histidine degradation into L-glutamate; N-formimidoyl-L-glutamate from L-histidine: step 3/3. Functionally, catalyzes the hydrolytic cleavage of the carbon-nitrogen bond in imidazolone-5-propanoate to yield N-formimidoyl-L-glutamate. It is the third step in the universal histidine degradation pathway. In Aromatoleum aromaticum (strain DSM 19018 / LMG 30748 / EbN1) (Azoarcus sp. (strain EbN1)), this protein is Imidazolonepropionase.